A 177-amino-acid chain; its full sequence is MKMFFRLTRELRDELKRPLGELVRGPIPEPYLKVRGELEKHPVVTVGDVVTENVLKIGVKPIIALYDLKTKRKEYSPEIEDTAVFLTVTNPPGTITKALLDTVRKAFGLAERGRNVHILVSGEEDLAAIPAVLYAPLGTLVLYGQPDEGVVLIKVTPECKRRCAKILASMEVVRDGD.

Residues Gly25, Tyr31, Asp48, Val49, Val50, Asp67, Lys69, Glu124, and Asp147 each contribute to the GTP site.

It belongs to the GTP-dependent DPCK family. In terms of assembly, monomer in solution.

It carries out the reaction 3'-dephospho-CoA + GTP = GDP + CoA + H(+). It participates in cofactor biosynthesis; coenzyme A biosynthesis. Functionally, catalyzes the GTP-dependent phosphorylation of the 3'-hydroxyl group of dephosphocoenzyme A to form coenzyme A (CoA). Can also use UTP, with lower efficiency and has weak activity with ATP, but shows a strong preference for GTP as the phosphate donor. This is GTP-dependent dephospho-CoA kinase from Thermococcus kodakarensis (strain ATCC BAA-918 / JCM 12380 / KOD1) (Pyrococcus kodakaraensis (strain KOD1)).